The primary structure comprises 477 residues: MIQVLLVIICLAVPYQGSSIILESGNVNDYEVVYPRKVTALPKGAVQPKYEDAMQYELKVNGEPVVLHLEKNKGLFSKDYIETHYSPDGRKITTNPPVEDHCYYHGRIQNDADSTASISACNGLKGHFKLQGETYLIEPLKLSNSEAHAVYKYEDVEKEDEAPKMCGVTQNWESYEPIKKASQSNLTPAHQRYIELVIVADHGMFTKYDSNLDTIRTWVHELVNSINEFYRSLNIDVSLTELEIWSNEDLINVQPAAPHTLDSFGKWRERDLLHRIHHDNAMLLTAIDFDEPTIGLAYVGTMCNPKGSTGVVQDHSTINLRVAVTMAHEIGHNLGIHHDTGSCSCGGYSCIMSPVISHEPSKYFSDCSYTQCWDFIMNQKPQCILNKPLRTDTVSTPVSGNELLEAGEECDCGSPGNPCCDAATCKLRQGAQCAEGLCCDQCRFMKKGTVCRIARGDDMDDYCNGISAGCPRNPFHA.

An N-terminal signal peptide occupies residues M1–S19. A propeptide spanning residues I20 to L186 is cleaved from the precursor. A Peptidase M12B domain is found at R192–P388. Residues E195 and D279 each coordinate Ca(2+). 3 disulfides stabilise this stretch: C303/C383, C343/C367, and C345/C350. H328 is a Zn(2+) binding site. E329 is a catalytic residue. Zn(2+) contacts are provided by H332 and H338. Residues C383 and N386 each coordinate Ca(2+). Residues L389–L404 constitute a propeptide that is removed on maturation. The region spanning T396–A477 is the Disintegrin domain. Disulfide bonds link C410/C425, C412/C420, C419/C442, C433/C439, C438/C463, and C451/C470. The short motif at R455–D457 is the Cell attachment site element.

Belongs to the venom metalloproteinase (M12B) family. P-II subfamily. P-IIa sub-subfamily. In terms of assembly, monomer. It depends on Zn(2+) as a cofactor. In terms of tissue distribution, expressed by the venom gland.

It is found in the secreted. Its function is as follows. Impairs hemostasis in the envenomed animal. Functionally, inhibits platelet aggregation induced by ADP, thrombin, platelet-activating factor and collagen. Acts by inhibiting fibrinogen interaction with platelet receptors GPIIb/GPIIIa (ITGA2B/ITGB3). In Gloydius halys (Chinese water mocassin), this protein is Zinc metalloproteinase/disintegrin.